The primary structure comprises 439 residues: Cobyrinate a,c-diamide synthase (439 aa).

Residues 214–235 (ETARAPPEVATTERNTGDSPAD) are disordered. A GATase cobBQ-type domain is found at 237–428 (RVAVAQDSAF…CHCHGESGAF (192 aa)). The active-site Nucleophile is Cys317.

The protein belongs to the CobB/CbiA family. The cofactor is Mg(2+).

The catalysed reaction is cob(II)yrinate + 2 L-glutamine + 2 ATP + 2 H2O = cob(II)yrinate a,c diamide + 2 L-glutamate + 2 ADP + 2 phosphate + 2 H(+). The protein operates within cofactor biosynthesis; adenosylcobalamin biosynthesis; cob(II)yrinate a,c-diamide from sirohydrochlorin (anaerobic route): step 10/10. Functionally, catalyzes the ATP-dependent amidation of the two carboxylate groups at positions a and c of cobyrinate, using either L-glutamine or ammonia as the nitrogen source. In Haloarcula marismortui (strain ATCC 43049 / DSM 3752 / JCM 8966 / VKM B-1809) (Halobacterium marismortui), this protein is Cobyrinate a,c-diamide synthase.